The following is a 74-amino-acid chain: SPbeta prophage-derived uncharacterized HTH-type transcriptional regulator YopS (74 aa).

The HTH cro/C1-type domain occupies 11–66 (IPELCRKKDITINELSEITGIKKQQLSDYNRLVKVDMSIRTAKRIAAALDCNVEDL). The segment at residues 22 to 41 (INELSEITGIKKQQLSDYNR) is a DNA-binding region (H-T-H motif).

The chain is SPbeta prophage-derived uncharacterized HTH-type transcriptional regulator YopS (yopS) from Bacillus subtilis (strain 168).